We begin with the raw amino-acid sequence, 404 residues long: Cysteine desulfurase IscS (404 aa).

Pyridoxal 5'-phosphate-binding positions include 75–76 (AT), asparagine 155, glutamine 183, and 203–205 (SAH). At lysine 206 the chain carries N6-(pyridoxal phosphate)lysine. Threonine 243 serves as a coordination point for pyridoxal 5'-phosphate. Residue cysteine 328 is the Cysteine persulfide intermediate of the active site. [2Fe-2S] cluster is bound at residue cysteine 328.

It belongs to the class-V pyridoxal-phosphate-dependent aminotransferase family. NifS/IscS subfamily. In terms of assembly, homodimer. Forms a heterotetramer with IscU, interacts with other sulfur acceptors. It depends on pyridoxal 5'-phosphate as a cofactor.

The protein resides in the cytoplasm. It carries out the reaction (sulfur carrier)-H + L-cysteine = (sulfur carrier)-SH + L-alanine. It participates in cofactor biosynthesis; iron-sulfur cluster biosynthesis. Its function is as follows. Master enzyme that delivers sulfur to a number of partners involved in Fe-S cluster assembly, tRNA modification or cofactor biosynthesis. Catalyzes the removal of elemental sulfur atoms from cysteine to produce alanine. Functions as a sulfur delivery protein for Fe-S cluster synthesis onto IscU, an Fe-S scaffold assembly protein, as well as other S acceptor proteins. The chain is Cysteine desulfurase IscS from Pseudomonas putida (strain W619).